The chain runs to 623 residues: Xaa-Pro aminopeptidase 1 (623 aa).

An a peptide-binding site is contributed by R77. K304 bears the N6-acetyllysine mark. H395 provides a ligand contact to a peptide. Mn(2+) contacts are provided by D415, D426, and H489. A peptide-binding residues include H489, H498, and E523. Mn(2+) contacts are provided by E523 and E537.

The protein belongs to the peptidase M24B family. Homodimer. The cofactor is Mn(2+). As to expression, expressed in all tissues tested, including liver, adrenal decapsular tissue, adrenal capsular tissue, corpus luteum, testis, submandibular gland, thymus, brain, cerebellum and heart. Highest levels in testis.

The protein resides in the cytoplasm. The enzyme catalyses Release of any N-terminal amino acid, including proline, that is linked to proline, even from a dipeptide or tripeptide.. With respect to regulation, inhibited by inositol hexakisphosphate. Functionally, metalloaminopeptidase that catalyzes the removal of a penultimate prolyl residue from the N-termini of peptides, such as Arg-Pro-Pro. Contributes to the degradation of bradykinin. This is Xaa-Pro aminopeptidase 1 from Rattus norvegicus (Rat).